The primary structure comprises 250 residues: Aquaporin TIP2-2 (250 aa).

2 consecutive transmembrane segments (helical) span residues 22 to 42 (VAEF…AIAF) and 54 to 74 (AGLV…VSVA). The NPA 1 motif lies at 83–85 (NPA). 3 consecutive transmembrane segments (helical) span residues 97–119 (TVLT…CLLL), 142–162 (GVVF…ATAA), and 169–189 (LGTI…LAAG). The NPA 2 motif lies at 197-199 (NPA). Residues 218–238 (WVGPLIGGGLAGLVYGDVFIG) form a helical membrane-spanning segment.

It belongs to the MIP/aquaporin (TC 1.A.8) family. TIP (TC 1.A.8.10) subfamily.

It is found in the vacuole membrane. In terms of biological role, aquaporins facilitate the transport of water and small neutral solutes across cell membranes. The polypeptide is Aquaporin TIP2-2 (TIP2-2) (Zea mays (Maize)).